The following is a 510-amino-acid chain: Inositol-3-phosphate synthase isozyme 2 (510 aa).

The protein belongs to the myo-inositol 1-phosphate synthase family. Requires NAD(+) as cofactor. Expressed in siliques, leaves, roots, seed endosperm, but not in embryos. Highest expression in seeds. In leaves, only expressed in hydathodes and vascular tissue.

The protein localises to the cytoplasm. It carries out the reaction D-glucose 6-phosphate = 1D-myo-inositol 3-phosphate. Its pathway is polyol metabolism; myo-inositol biosynthesis; myo-inositol from D-glucose 6-phosphate: step 1/2. Key enzyme in myo-inositol biosynthesis pathway that catalyzes the conversion of glucose 6-phosphate to 1-myo-inositol 1-phosphate in a NAD-dependent manner. The protein is Inositol-3-phosphate synthase isozyme 2 (IPS2) of Arabidopsis thaliana (Mouse-ear cress).